The primary structure comprises 973 residues: Sodium/calcium exchanger 1 (973 aa).

The N-terminal stretch at 1-35 (MYNMRRLSLSPTFSMGFHLLVTVSLLFSHVDHVIA) is a signal peptide. Residues 36-74 (ETEMEGEGNETGECTGSYYCKKGVILPIWEPQDPSFGDK) lie on the Extracellular side of the membrane. N-linked (GlcNAc...) asparagine glycosylation occurs at asparagine 44. Residues 75-95 (IARATVYFVAMVYMFLGVSII) traverse the membrane as a helical segment. The Cytoplasmic portion of the chain corresponds to 96-136 (ADRFMSSIEVITSQEKEITIKKPNGETTKTTVRIWNETVSN). The chain crosses the membrane as a helical span at residues 137–157 (LTLMALGSSAPEILLSVIEVC). The stretch at 141-181 (ALGSSAPEILLSVIEVCGHNFTAGDLGPSTIVGSAAFNMFI) is one Alpha-1 repeat. Residues 158–170 (GHNFTAGDLGPST) are Extracellular-facing. Residue asparagine 160 is glycosylated (N-linked (GlcNAc...) asparagine). The helical transmembrane segment at 171-191 (IVGSAAFNMFIIIALCVYVVP) threads the bilayer. The Cytoplasmic portion of the chain corresponds to 192 to 204 (DGETRKIKHLRVF). A helical membrane pass occupies residues 205 to 225 (FVTAAWSIFAYTWLYIILSVI). Residues 226–231 (SPGVVE) lie on the Extracellular side of the membrane. The helical transmembrane segment at 232–252 (VWEGLLTFFFFPICVVFAWVA) threads the bilayer. Residues 253–800 (DRRLLFYKYV…FVPPTEYWNG (548 aa)) lie on the Cytoplasmic side of the membrane. Residues 254–273 (RRLLFYKYVYKRYRAGKQRG) are putative calmodulin-binding region. Serine 285 and serine 392 each carry phosphoserine. Calx-beta domains follow at residues 396–496 (VNTE…VHLS) and 527–627 (ATVT…LEIG). Ca(2+)-binding residues include glutamate 420, aspartate 456, aspartate 481, aspartate 482, isoleucine 484, glutamate 486, glutamate 489, aspartate 533, aspartate 534, aspartate 535, glutamate 551, aspartate 587, aspartate 613, glutamate 614, glutamate 615, and glutamate 718. Residues 801–821 (WACFIVSILMIGLLTAFIGDL) form a helical membrane-spanning segment. The Extracellular portion of the chain corresponds to 822 to 824 (ASH). The chain crosses the membrane as a helical span at residues 825–845 (FGCTIGLKDSVTAVVFVALGT). The stretch at 842 to 878 (ALGTSVPDTFASKVAATQDQYADASIGNVTGSNAVNV) is one Alpha-2 repeat. The Cytoplasmic segment spans residues 846–874 (SVPDTFASKVAATQDQYADASIGNVTGSN). Residues 875–895 (AVNVFLGIGVAWSIAAIYHAA) traverse the membrane as a helical segment. The Extracellular segment spans residues 896 to 906 (NGEQFKVSPGT). A helical membrane pass occupies residues 907 to 927 (LAFSVTLFTIFAFINVGVLLY). The Cytoplasmic portion of the chain corresponds to 928–944 (RRRPEIGGELGGPRTAK). Residues 945–965 (LLTSCLFVLLWLLYIFFSSLE) traverse the membrane as a helical segment. At 966-973 (AYCHIKGF) the chain is on the extracellular side.

It belongs to the Ca(2+):cation antiporter (CaCA) (TC 2.A.19) family. SLC8 subfamily. In terms of tissue distribution, detected primarily in heart and at lower levels in brain. Expressed in cardiac sarcolemma, brain, kidney, liver, pancreas, skeletal muscle, placenta and lung.

It localises to the cell membrane. It catalyses the reaction Ca(2+)(in) + 3 Na(+)(out) = Ca(2+)(out) + 3 Na(+)(in). Its activity is regulated as follows. Activated by micromolar levels of Ca(2+). Its function is as follows. Mediates the exchange of one Ca(2+) ion against three to four Na(+) ions across the cell membrane, and thereby contributes to the regulation of cytoplasmic Ca(2+) levels and Ca(2+)-dependent cellular processes. Contributes to Ca(2+) transport during excitation-contraction coupling in muscle. In a first phase, voltage-gated channels mediate the rapid increase of cytoplasmic Ca(2+) levels due to release of Ca(2+) stores from the endoplasmic reticulum. SLC8A1 mediates the export of Ca(2+) from the cell during the next phase, so that cytoplasmic Ca(2+) levels rapidly return to baseline. Required for normal embryonic heart development and the onset of heart contractions. This is Sodium/calcium exchanger 1 (SLC8A1) from Homo sapiens (Human).